The following is a 711-amino-acid chain: Amino-acid racemase (711 aa).

Residues 1 to 14 are Cytoplasmic-facing; the sequence is MTKNESYSGIDYFR. Residues 15–35 form a helical membrane-spanning segment; that stretch reads FIAALLIVAIHTSPLFSFSET. At 36–37 the chain is on the extracellular side; it reads GN. The helical transmembrane segment at 38–58 threads the bilayer; sequence FIFTRIVAPVAVPFFFMTSGF. Topologically, residues 59–78 are cytoplasmic; it reads FLISRYTCNAEKLGAFIKKT. Residues 79 to 99 traverse the membrane as a helical segment; the sequence is TLIYGVAILLYIPINVYNGYF. Topologically, residues 100 to 117 are extracellular; sequence KMDNLLPNIIKDIVFDGT. Residues 118–138 form a helical membrane-spanning segment; the sequence is LYHLWYLPASIIGAAIAWYLV. Residues 139-146 lie on the Cytoplasmic side of the membrane; sequence KKVHYRKA. The helical transmembrane segment at 147-167 threads the bilayer; it reads FLIASILYIIGLFGDSYYGIV. Over 168-188 the chain is Extracellular; sequence KSVSCLNVFYNLIFQLTDYTR. A helical transmembrane segment spans residues 189 to 209; sequence NGIFFAPIFFVLGGYISDSPN. Over 210–241 the chain is Cytoplasmic; the sequence is RYRKKNYIRIYSLFCLMFGKTLTLQHFDIQKH. Residues 242 to 262 traverse the membrane as a helical segment; that stretch reads DSMYVLLLPSVWCLFNLLLHF. The Extracellular segment spans residues 263-306; it reads RGKRRTGLRTISLDQLYHSSVYDCCNTIVCAELLHLQSLLVENS. A helical transmembrane segment spans residues 307-327; sequence LVHYIAVCFASVVLAVVITAL. The Cytoplasmic portion of the chain corresponds to 328-711; it reads LSSLKPKKAK…EHRLNIIRRA (384 aa). The interval 336–711 is racemase; it reads AKHTADTDRA…EHRLNIIRRA (376 aa). Catalysis depends on Lys-376, which acts as the Proton acceptor. The residue at position 376 (Lys-376) is an N6-(pyridoxal phosphate)lysine. Arg-470 serves as a coordination point for substrate. Residue Tyr-602 is the Proton acceptor of the active site. Met-651 contributes to the substrate binding site.

It in the N-terminal section; belongs to the acyltransferase 3 family. This sequence in the C-terminal section; belongs to the alanine racemase family. Requires pyridoxal 5'-phosphate as cofactor.

It localises to the cell membrane. The protein is Amino-acid racemase (vanTG) of Enterococcus faecalis (Streptococcus faecalis).